The sequence spans 107 residues: Integration host factor subunit alpha (107 aa).

It belongs to the bacterial histone-like protein family. As to quaternary structure, heterodimer of an alpha and a beta chain.

In terms of biological role, this protein is one of the two subunits of integration host factor, a specific DNA-binding protein that functions in genetic recombination as well as in transcriptional and translational control. This Brucella abortus (strain S19) protein is Integration host factor subunit alpha.